A 742-amino-acid polypeptide reads, in one-letter code: Dynein axonemal intermediate chain 4 (742 aa).

WD repeat units follow at residues 462 to 502 (HCEC…DFPV), 511 to 559 (KHTS…DCND), 631 to 671 (GHKG…PILT), and 674 to 713 (NTTN…IDPV).

Part of the multisubunit axonemal dynein complex formed at least of two heavy chains and a number of intermediate and light chains. Associated with axonemal dynein subunits such as, DNAH2, DNAI3, and DYNLT1.

It is found in the cytoplasm. Its subcellular location is the cytoskeleton. The protein localises to the flagellum axoneme. The protein resides in the cilium axoneme. It localises to the dynein axonemal particle. Functionally, plays a critical role in the assembly of axonemal dynein complex, thereby playing a role in ciliary motility. The protein is Dynein axonemal intermediate chain 4 of Xenopus laevis (African clawed frog).